Here is a 398-residue protein sequence, read N- to C-terminus: Riboflavin biosynthesis protein RibBA (398 aa).

Residues 1-199 (MFHPIEEALE…IKDLIEYRYN (199 aa)) form a DHBP synthase region. D-ribulose 5-phosphate is bound by residues 26-27 (RE), aspartate 31, 138-142 (RAGHT), and glutamate 162. Residue glutamate 27 participates in Mg(2+) binding. Histidine 141 is a Mg(2+) binding site. Positions 200-398 (ITTLVNREVD…MKKLGHLLHF (199 aa)) are GTP cyclohydrolase II. Residue 251 to 255 (RVHSE) participates in GTP binding. Residues cysteine 256, cysteine 267, and cysteine 269 each coordinate Zn(2+). GTP contacts are provided by residues glutamine 272, 294–296 (EGR), and threonine 316. Residue aspartate 328 is the Proton acceptor; for GTP cyclohydrolase activity of the active site. The active-site Nucleophile; for GTP cyclohydrolase activity is the arginine 330. GTP is bound by residues threonine 351 and lysine 356.

It in the N-terminal section; belongs to the DHBP synthase family. The protein in the C-terminal section; belongs to the GTP cyclohydrolase II family. It depends on Mg(2+) as a cofactor. Mn(2+) serves as cofactor. The cofactor is Zn(2+).

It carries out the reaction D-ribulose 5-phosphate = (2S)-2-hydroxy-3-oxobutyl phosphate + formate + H(+). It catalyses the reaction GTP + 4 H2O = 2,5-diamino-6-hydroxy-4-(5-phosphoribosylamino)-pyrimidine + formate + 2 phosphate + 3 H(+). It participates in cofactor biosynthesis; riboflavin biosynthesis; 2-hydroxy-3-oxobutyl phosphate from D-ribulose 5-phosphate: step 1/1. Its pathway is cofactor biosynthesis; riboflavin biosynthesis; 5-amino-6-(D-ribitylamino)uracil from GTP: step 1/4. Its function is as follows. Catalyzes the conversion of D-ribulose 5-phosphate to formate and 3,4-dihydroxy-2-butanone 4-phosphate. In terms of biological role, catalyzes the conversion of GTP to 2,5-diamino-6-ribosylamino-4(3H)-pyrimidinone 5'-phosphate (DARP), formate and pyrophosphate. This is Riboflavin biosynthesis protein RibBA from Bacillus velezensis (strain DSM 23117 / BGSC 10A6 / LMG 26770 / FZB42) (Bacillus amyloliquefaciens subsp. plantarum).